The sequence spans 734 residues: Ribosomal RNA large subunit methyltransferase K/L (734 aa).

Positions 49-167 (HAYRICMWSR…KTEHTYCLDL (119 aa)) constitute a THUMP domain.

It belongs to the methyltransferase superfamily. RlmKL family.

The protein localises to the cytoplasm. The enzyme catalyses guanosine(2445) in 23S rRNA + S-adenosyl-L-methionine = N(2)-methylguanosine(2445) in 23S rRNA + S-adenosyl-L-homocysteine + H(+). It catalyses the reaction guanosine(2069) in 23S rRNA + S-adenosyl-L-methionine = N(2)-methylguanosine(2069) in 23S rRNA + S-adenosyl-L-homocysteine + H(+). Functionally, specifically methylates the guanine in position 2445 (m2G2445) and the guanine in position 2069 (m7G2069) of 23S rRNA. In Acinetobacter baumannii (strain ACICU), this protein is Ribosomal RNA large subunit methyltransferase K/L.